A 190-amino-acid chain; its full sequence is MSVTSLSFPYGESIQWFCADNAKNLPSSPLKEWLLAPGSLTQKLKGCCDKFEVKILGEGQCVPLEGEYPKQNAVWVREVLLCLDSVPWVFARTLIPQSLLSTRQADFLGLGTRPLGELLFSQDSFVPGRIEIARFTTESRLAQLAQSLAQNVEHELWGRRRYFHHDQEEMFVSEMFLPAAVQAMAKLKLD.

Residues arginine 77, leucine 115, and glutamate 174 each coordinate substrate.

Belongs to the UbiC family.

The protein localises to the cytoplasm. It carries out the reaction chorismate = 4-hydroxybenzoate + pyruvate. The protein operates within cofactor biosynthesis; ubiquinone biosynthesis. Its function is as follows. Removes the pyruvyl group from chorismate, with concomitant aromatization of the ring, to provide 4-hydroxybenzoate (4HB) for the ubiquinone pathway. The chain is Probable chorismate pyruvate-lyase from Shewanella sp. (strain MR-4).